A 333-amino-acid polypeptide reads, in one-letter code: Geranylgeranyl pyrophosphate synthase olcC (333 aa).

Positions 61, 64, and 93 each coordinate isopentenyl diphosphate. 2 residues coordinate Mg(2+): D100 and D104. R109 lines the dimethylallyl diphosphate pocket. R110 is a binding site for isopentenyl diphosphate. Dimethylallyl diphosphate-binding residues include K187, T188, and Q221. D224 contacts Mg(2+). Dimethylallyl diphosphate contacts are provided by N228, K238, and K248.

It belongs to the FPP/GGPP synthase family. Mg(2+) serves as cofactor.

The catalysed reaction is isopentenyl diphosphate + dimethylallyl diphosphate = (2E)-geranyl diphosphate + diphosphate. The enzyme catalyses isopentenyl diphosphate + (2E)-geranyl diphosphate = (2E,6E)-farnesyl diphosphate + diphosphate. It catalyses the reaction isopentenyl diphosphate + (2E,6E)-farnesyl diphosphate = (2E,6E,10E)-geranylgeranyl diphosphate + diphosphate. Its pathway is secondary metabolite biosynthesis; terpenoid biosynthesis. In terms of biological role, geranylgeranyl pyrophosphate synthase; part of the gene cluster that mediates the biosynthesis of 15-deoxyoxalicine B. The first step of the pathway is the synthesis of nicotinyl-CoA from nicotinic acid by the nicotinic acid-CoA ligase olcI. Nicotinyl-CoA is then a substrate of polyketide synthase olcA to produce 4-hydroxy-6-(3-pyridinyl)-2H-pyran-2-one (HPPO) which is further prenylated by the polyprenyl transferase olcH to yield geranylgeranyl-HPPO. Geranylgeranyl pyrophosphate is provided by the cluster-specific geranylgeranyl pyrophosphate synthase olcC. The FAD-dependent monooxygenase olcE catalyzes the epoxidation of geranylgeranyl-HPPO and the terpene cyclase olcD catalyzes the cyclization of the terpenoid component, resulting in the formation of the tricyclic terpene moiety seen in predecaturin E. The cytochrome P450 monooxygenase then catalyzes the allylic oxidation of predecaturin E, which is followed by spirocylization with concomitant loss of one molecule of water to form decaturin E. Decaturin E is the substrate of the cytochrome P450 monooxygenase olcJ which hydroxylates it at the C-29 position to form decaturin F. The short-chain dehydrogenase/reductase olcF may catalyze the oxidation of decaturin F to generate the 29-hydroxyl-27-one intermediate, and subsequent hemiacetal formation probably leads to the formation of decaturin C. The dioxygenase olcK may be a peroxisomal enzyme that catalyzes the hydroxylation of decaturin C into decaturin A once decaturin C is shuttled into the peroxisome by the MFS transporter olcL. Finally the cytochrome P450 monooxygenase olcB catalyzes the oxidative rearrangement to yield 15-deoxyoxalicine B. In the absence of olcJ, decaturin E may be shunted to a pathway in which it is oxidized to a ketone, possibly by olcF, to form decaturin D, which undergoes further allylic oxidation to yield decaturin G. Moreover, in the absence of oclK or oclL, oclB can convert decaturin C into 15-deoxyoxalicine A. This chain is Geranylgeranyl pyrophosphate synthase olcC, found in Penicillium canescens.